Consider the following 328-residue polypeptide: Cell division protein ZipA (328 aa).

The Periplasmic segment spans residues 1 to 4 (MDLN). A helical transmembrane segment spans residues 5 to 25 (TILIIVGIVALVALIVHGLWS). Over 26–328 (NRREKSKYFD…NAEQAYLARV (303 aa)) the chain is Cytoplasmic. Residues 43–82 (TSLTSRSHTQEEMAQPNNISPNTYVENGHTPIPQPTTEKV) are disordered. A compositionally biased stretch (polar residues) spans 57–67 (QPNNISPNTYV).

It belongs to the ZipA family. Interacts with FtsZ via their C-terminal domains.

It localises to the cell inner membrane. Essential cell division protein that stabilizes the FtsZ protofilaments by cross-linking them and that serves as a cytoplasmic membrane anchor for the Z ring. Also required for the recruitment to the septal ring of downstream cell division proteins. The protein is Cell division protein ZipA of Haemophilus influenzae (strain PittEE).